A 1004-amino-acid chain; its full sequence is Cadmium/zinc-transporting ATPase HMA3 (1004 aa).

The HMA domain maps to 42–108; it reads KKTYLDVLGV…ALNKAGLEAS (67 aa). 8 helical membrane passes run 120–140, 144–164, 171–191, 193–213, 340–360, 371–391, 683–703, and 707–727; these read RWPS…FFEW, PLQC…VRRG, LSLD…CLGD, TEAG…TLAC, CAKY…LIPA, WKLA…LSTP, IAVN…LAAA, and VLWA…LNSM. Positions 931–952 are disordered; the sequence is TGCGASKRSPPAEGSCSGGEGG.

It belongs to the cation transport ATPase (P-type) (TC 3.A.3) family. Type IB subfamily. In terms of tissue distribution, specifically expressed in roots.

The protein resides in the vacuole membrane. The enzyme catalyses Zn(2+)(in) + ATP + H2O = Zn(2+)(out) + ADP + phosphate + H(+). It carries out the reaction Cd(2+)(in) + ATP + H2O = Cd(2+)(out) + ADP + phosphate + H(+). In terms of biological role, root-specific cadmium (Cd) transporter that mediates Cd efflux in root vacuoles. Involved in Cd detoxification by sequestrating Cd into root vacuoles and limiting translocation of Cd from the roots to the shoots, and accumulation in grains. The sequence is that of Cadmium/zinc-transporting ATPase HMA3 from Oryza sativa subsp. japonica (Rice).